Here is a 208-residue protein sequence, read N- to C-terminus: Fibroblast growth factor 10 (208 aa).

The first 37 residues, 1–37 (MWKWILTHCASAFPHLPGCCCCCFLLLFLVSSVPVTC), serve as a signal peptide directing secretion. N-linked (GlcNAc...) asparagine glycans are attached at residues Asn51 and Asn196.

The protein belongs to the heparin-binding growth factors family. Interacts with FGFR1 and FGFR2. Interacts with FGFBP1.

Its subcellular location is the secreted. Its function is as follows. Plays an important role in the regulation of embryonic development, cell proliferation and cell differentiation. Required for normal branching morphogenesis. May play a role in wound healing. The protein is Fibroblast growth factor 10 (FGF10) of Homo sapiens (Human).